We begin with the raw amino-acid sequence, 548 residues long: Chaperonin GroEL (548 aa).

ATP-binding positions include 30–33, K51, 87–91, G415, 479–481, and D495; these read TLGP, DGTTT, and NAA.

This sequence belongs to the chaperonin (HSP60) family. Forms a cylinder of 14 subunits composed of two heptameric rings stacked back-to-back. Interacts with the co-chaperonin GroES.

It is found in the cytoplasm. It catalyses the reaction ATP + H2O + a folded polypeptide = ADP + phosphate + an unfolded polypeptide.. Together with its co-chaperonin GroES, plays an essential role in assisting protein folding. The GroEL-GroES system forms a nano-cage that allows encapsulation of the non-native substrate proteins and provides a physical environment optimized to promote and accelerate protein folding. This Serratia proteamaculans (strain 568) protein is Chaperonin GroEL.